We begin with the raw amino-acid sequence, 1052 residues long: Focal adhesion kinase 1 (1052 aa).

Residues 1-27 form a disordered region; that stretch reads MAAAYLDPNLNHTPSSSTKTHLGTGME. Position 2 is an N-acetylalanine (Ala2). The residue at position 5 (Tyr5) is a Phosphotyrosine. Polar residues predominate over residues 10-21; sequence LNHTPSSSTKTH. Thr13 carries the post-translational modification Phosphothreonine. A phosphoserine mark is found at Ser29 and Ser54. One can recognise an FERM domain in the interval 35 to 355; sequence RVLKVFHYFE…GYCRLVNGAT (321 aa). Lys152 participates in a covalent cross-link: Glycyl lysine isopeptide (Lys-Gly) (interchain with G-Cter in SUMO). 2 positions are modified to phosphotyrosine: Tyr397 and Tyr407. Tyr397 is subject to Phosphotyrosine; by autocatalysis. ATP is bound by residues 428 to 434, Lys454, and 500 to 502; these read IGEGQFG and ELC. One can recognise a Protein kinase domain in the interval 431–680; that stretch reads GQFGDVHQGV…ELKAQLSTIL (250 aa). Asp546 functions as the Proton acceptor in the catalytic mechanism. Residue Tyr570 is modified to Phosphotyrosine. Residues Tyr576 and Tyr577 each carry the phosphotyrosine; by RET and SRC modification. Position 580 is a phosphoserine (Ser580). Positions 685–697 are enriched in basic and acidic residues; that stretch reads VQQEERMRMESRR. Disordered regions lie at residues 685 to 734 and 837 to 921; these read VQQE…PSPQ and VRLS…DRSN. Residues 707 to 1052 form an interaction with TGFB1I1 region; sequence GSDEAPPKPS…LKMLGQTRPH (346 aa). A Phosphoserine modification is found at Ser722. Ser732 carries the post-translational modification Phosphoserine; by CDK5. The segment covering 837–849 has biased composition (basic and acidic residues); sequence VRLSRGSIDREDG. Ser843 is modified (phosphoserine). At Tyr861 the chain carries Phosphotyrosine. The span at 869–880 shows a compositional bias: pro residues; that stretch reads PAAPPKKPPRPG. A compositionally biased stretch (polar residues) spans 886–896; that stretch reads SNLSSISSPAD. Ser910 is modified (phosphoserine). The interaction with ARHGEF28 stretch occupies residues 912–1052; it reads PPTANLDRSN…LKMLGQTRPH (141 aa). A Phosphothreonine modification is found at Thr914. Tyr925 carries the post-translational modification Phosphotyrosine; by SRC.

This sequence belongs to the protein kinase superfamily. Tyr protein kinase family. FAK subfamily. As to quaternary structure, interacts with GIT1. Component of a complex that contains at least FER, CTTN and PTK2/FAK1. Interacts with BMX. Interacts with STEAP4. Interacts with ZFYVE21. Interacts with ESR1. Interacts with FGR, FLT4 and RET. Interacts with EPHA2 in resting cells; activation of EPHA2 recruits PTPN11, leading to dephosphorylation of PTK2/FAK1 and dissociation of the complex. Interacts with EPHA1 (kinase activity-dependent). Interacts with MISP. Interacts with PIAS1. Interacts with ARHGAP26 and SHC1. Interacts with RB1CC1; this inhibits PTK2/FAK1 activity and activation of downstream signaling pathways. Interacts with P53/TP53. Interacts with STAT1. Interacts with WASL. Interacts with ARHGEF7. Interacts with DCC. Interacts (via first Pro-rich region) with CAS family members (via SH3 domain), including BCAR1, BCAR3 and CASS4. Interacts with NEDD9 (via C-terminus). Interacts with SORBS1. Interacts with ARHGEF28. Interacts with SHB. Part of a complex composed of THSD1, PTK2/FAK1, TLN1 and VCL. Interacts with PXN and TLN1. Interacts with TGFB1I1. Interacts with PIK3R1 or PIK3R2. Interacts with SRC, GRB2 and GRB7. Interacts with LPXN (via LD motif 3). Interacts with CD36. Interacts with EMP2; regulates PTK2 activation and localization. Interacts with DSCAM. Interacts with AMBRA1. Interacts (when tyrosine-phosphorylated) with tensin TNS1; the interaction is increased by phosphorylation of TNS1. In terms of processing, phosphorylated on tyrosine residues upon activation, e.g. upon integrin signaling. Tyr-397 is the major autophosphorylation site, but other kinases can also phosphorylate this residue. Phosphorylation at Tyr-397 promotes interaction with SRC and SRC family members, leading to phosphorylation at Tyr-576, Tyr-577 and at additional tyrosine residues. FGR promotes phosphorylation at Tyr-397 and Tyr-576. FER promotes phosphorylation at Tyr-577, Tyr-861 and Tyr-925, even when cells are not adherent. Tyr-397, Tyr-576 and Ser-722 are phosphorylated only when cells are adherent. Phosphorylation at Tyr-397 is important for interaction with BMX, PIK3R1 and SHC1. Phosphorylation at Tyr-925 is important for interaction with GRB2. Dephosphorylated by PTPN11; PTPN11 is recruited to PTK2 via EPHA2 (tyrosine phosphorylated). Microtubule-induced dephosphorylation at Tyr-397 is crucial for the induction of focal adhesion disassembly; this dephosphorylation could be catalyzed by PTPN11 and regulated by ZFYVE21. Phosphorylation on tyrosine residues is enhanced by NTN1. Sumoylated; this enhances autophosphorylation.

The protein localises to the cell junction. The protein resides in the focal adhesion. It localises to the cell membrane. Its subcellular location is the cytoplasm. It is found in the perinuclear region. The protein localises to the cell cortex. The protein resides in the cytoskeleton. It localises to the microtubule organizing center. Its subcellular location is the centrosome. It is found in the nucleus. The protein localises to the cilium basal body. It carries out the reaction L-tyrosyl-[protein] + ATP = O-phospho-L-tyrosyl-[protein] + ADP + H(+). Subject to autoinhibition, mediated by interactions between the FERM domain and the kinase domain. Activated by autophosphorylation at Tyr-397. This promotes interaction with SRC and phosphorylation at Tyr-576 and Tyr-577 in the kinase activation loop by SRC. Phosphorylation at Tyr-397, Tyr-576 and Tyr-577 is required for maximal kinase activity. Non-receptor protein-tyrosine kinase that plays an essential role in regulating cell migration, adhesion, spreading, reorganization of the actin cytoskeleton, formation and disassembly of focal adhesions and cell protrusions, cell cycle progression, cell proliferation and apoptosis. Required for early embryonic development and placenta development. Required for embryonic angiogenesis, normal cardiomyocyte migration and proliferation, and normal heart development. Regulates axon growth and neuronal cell migration, axon branching and synapse formation; required for normal development of the nervous system. Plays a role in osteogenesis and differentiation of osteoblasts. Functions in integrin signal transduction, but also in signaling downstream of numerous growth factor receptors, G-protein coupled receptors (GPCR), EPHA2, netrin receptors and LDL receptors. Forms multisubunit signaling complexes with SRC and SRC family members upon activation; this leads to the phosphorylation of additional tyrosine residues, creating binding sites for scaffold proteins, effectors and substrates. Regulates numerous signaling pathways. Promotes activation of phosphatidylinositol 3-kinase and the AKT1 signaling cascade. Promotes activation of MAPK1/ERK2, MAPK3/ERK1 and the MAP kinase signaling cascade. Promotes localized and transient activation of guanine nucleotide exchange factors (GEFs) and GTPase-activating proteins (GAPs), and thereby modulates the activity of Rho family GTPases. Signaling via CAS family members mediates activation of RAC1. Phosphorylates NEDD9 following integrin stimulation. Recruits the ubiquitin ligase MDM2 to P53/TP53 in the nucleus, and thereby regulates P53/TP53 activity, P53/TP53 ubiquitination and proteasomal degradation. Phosphorylates SRC; this increases SRC kinase activity. Phosphorylates ACTN1, ARHGEF7, GRB7, RET and WASL. Promotes phosphorylation of PXN and STAT1; most likely PXN and STAT1 are phosphorylated by a SRC family kinase that is recruited to autophosphorylated PTK2/FAK1, rather than by PTK2/FAK1 itself. Promotes phosphorylation of BCAR1; GIT2 and SHC1; this requires both SRC and PTK2/FAK1. Promotes phosphorylation of BMX and PIK3R1. In terms of biological role, does not contain a kinase domain and inhibits PTK2/FAK1 phosphorylation and signaling. Its enhanced expression can attenuate the nuclear accumulation of LPXN and limit its ability to enhance serum response factor (SRF)-dependent gene transcription. This Mus musculus (Mouse) protein is Focal adhesion kinase 1.